We begin with the raw amino-acid sequence, 473 residues long: 23S rRNA (uracil(1939)-C(5))-methyltransferase RlmD (473 aa).

The interval 6–27 (KPSKGKNKSNVKGRVRGAGSGE) is disordered. Over residues 8-20 (SKGKNKSNVKGRV) the composition is skewed to basic residues. Residues 42-99 (DDINAANEAVTIDGMDWQGQGVARGDTLYFVDGALPGETVEIKALSSNKQIVNAKVTK) form the TRAM domain. 4 residues coordinate [4Fe-4S] cluster: Cys112, Cys118, Cys121, and Cys199. S-adenosyl-L-methionine contacts are provided by Gln304, Phe333, Asn338, Glu354, Asp381, and Asp402. The active-site Nucleophile is the Cys428.

Belongs to the class I-like SAM-binding methyltransferase superfamily. RNA M5U methyltransferase family. RlmD subfamily.

It carries out the reaction uridine(1939) in 23S rRNA + S-adenosyl-L-methionine = 5-methyluridine(1939) in 23S rRNA + S-adenosyl-L-homocysteine + H(+). Catalyzes the formation of 5-methyl-uridine at position 1939 (m5U1939) in 23S rRNA. In Alteromonas naphthalenivorans, this protein is 23S rRNA (uracil(1939)-C(5))-methyltransferase RlmD.